The following is a 309-amino-acid chain: L-lactate dehydrogenase (309 aa).

Residues Val-12, Asp-33, Arg-38, Tyr-63, and 77 to 78 contribute to the NAD(+) site; that span reads GA. Substrate contacts are provided by residues Gln-80, Arg-86, and 118-121; that span reads NPVD. NAD(+) contacts are provided by residues 116–118 and Ser-141; that span reads ATN. 146-149 provides a ligand contact to substrate; it reads DSAR. Residues Arg-151 and His-166 each contribute to the beta-D-fructose 1,6-bisphosphate site. The Proton acceptor role is filled by His-173. Tyr-219 is subject to Phosphotyrosine. Position 228 (Thr-228) interacts with substrate.

The protein belongs to the LDH/MDH superfamily. LDH family. In terms of assembly, homotetramer.

Its subcellular location is the cytoplasm. The catalysed reaction is (S)-lactate + NAD(+) = pyruvate + NADH + H(+). The protein operates within fermentation; pyruvate fermentation to lactate; (S)-lactate from pyruvate: step 1/1. With respect to regulation, allosterically activated by fructose 1,6-bisphosphate (FBP). Functionally, catalyzes the conversion of lactate to pyruvate. The protein is L-lactate dehydrogenase of Nitratidesulfovibrio vulgaris (strain ATCC 29579 / DSM 644 / CCUG 34227 / NCIMB 8303 / VKM B-1760 / Hildenborough) (Desulfovibrio vulgaris).